A 442-amino-acid chain; its full sequence is Signal recognition particle 54 kDa protein (442 aa).

GTP is bound by residues 106-113 (GLQGSGKT), 186-190 (DTAGR), and 244-247 (TKLD).

It belongs to the GTP-binding SRP family. SRP54 subfamily. As to quaternary structure, part of the signal recognition particle protein translocation system, which is composed of SRP and FtsY. Archaeal SRP consists of a 7S RNA molecule of 300 nucleotides and two protein subunits: SRP54 and SRP19.

It localises to the cytoplasm. It catalyses the reaction GTP + H2O = GDP + phosphate + H(+). Involved in targeting and insertion of nascent membrane proteins into the cytoplasmic membrane. Binds to the hydrophobic signal sequence of the ribosome-nascent chain (RNC) as it emerges from the ribosomes. The SRP-RNC complex is then targeted to the cytoplasmic membrane where it interacts with the SRP receptor FtsY. The polypeptide is Signal recognition particle 54 kDa protein (Methanothermobacter thermautotrophicus (strain ATCC 29096 / DSM 1053 / JCM 10044 / NBRC 100330 / Delta H) (Methanobacterium thermoautotrophicum)).